Consider the following 539-residue polypeptide: Capsid protein VP1 (539 aa).

The interval 1–221 is shell domain; sequence MKMASNDANP…FIFLVPPTVE (221 aa). The interval 222–274 is P1 sub-domain 1; sequence SRTKPFTVPVLTVEEMSNSRFPIPLEKLYTGPSSAFVVQPQNGRCTTDGVLLG. Residues 222–539 form a protruding domain region; the sequence is SRTKPFTVPV…GNGTGRRRAL (318 aa). Residues 275–417 form a P2 sub-domain region; sequence TTQLSAVNIC…SGRTGHNVHL (143 aa). Residues 418-539 are P1 sub-domain 2; sequence APAVAPTFPG…GNGTGRRRAL (122 aa).

The protein belongs to the caliciviridae capsid protein family. As to quaternary structure, homodimer. Homomultimer. Interacts with the minor capsid protein VP2. Interacts (via C-terminus) with host type I histo-blood group structures antigens at the surface of target cells. Post-translationally, may be cleaved by host protease to generate soluble capsid protein. Assembled capsid cannot be cleaved.

The protein localises to the virion. Its subcellular location is the host cytoplasm. Its function is as follows. Capsid protein self assembles to form an icosahedral capsid with a T=3 symmetry, about 38 nm in diameter, and consisting of 180 capsid proteins. A smaller form of capsid with a diameter of 23 nm might be capsid proteins assembled as icosahedron with T=1 symmetry. The capsid encapsulates the genomic RNA and is decorated with VP2 proteins. Attaches virion to target cells by binding histo-blood group antigens (HBGAs) present on gastroduodenal epithelial cells. Functionally, the soluble capsid protein may play a role in viral immunoevasion. This chain is Capsid protein VP1, found in Homo sapiens (Human).